Consider the following 314-residue polypeptide: Ferric-anguibactin transport system permease protein FatD (314 aa).

Helical transmembrane passes span 1-21 (MTFR…FFGA), 49-69 (VALI…QHIV), 76-96 (PGTT…IVML), 103-123 (ERMF…IAII), 132-152 (ALVP…AEFY), 180-200 (IIFL…RFTV), 207-226 (IASN…LILV), 230-252 (VAVT…NLVA), 265-285 (IVAL…RVVL), and 288-308 (FEVP…LAFL).

It belongs to the binding-protein-dependent transport system permease family. FecCD subfamily. Part of an iron transport system composed of the outer membrane receptor FatA, the periplasmic binding protein FatB and the inner membrane proteins FatC and FatD.

The protein localises to the cell inner membrane. In terms of biological role, involved in the uptake of iron in complex with the siderophore anguibactin. Responsible for the translocation of ferric-anguibactin across the cytoplasmic membrane. The protein is Ferric-anguibactin transport system permease protein FatD of Vibrio anguillarum (strain ATCC 68554 / 775) (Listonella anguillarum).